A 315-amino-acid chain; its full sequence is Putative peptide transport system permease protein BMEII0209 (315 aa).

The next 6 membrane-spanning stretches (helical) occupy residues 13–33, 102–122, 136–156, 178–198, 238–258, and 287–307; these read AIPV…LLPG, LALL…VVAA, LALL…VILF, WLRS…GYLA, VSVL…SVVI, and MLFL…LYTI. In terms of domain architecture, ABC transmembrane type-1 spans 96-305; the sequence is LPVTISLALL…AINVLVDILY (210 aa).

The protein belongs to the binding-protein-dependent transport system permease family. In terms of assembly, the complex is composed of two ATP-binding proteins (BMEII0205 and BMEII0206), two transmembrane proteins (BMEII0207/BMEII0208 and BMEII0209) and a solute-binding protein (BMEII0210).

Its subcellular location is the cell inner membrane. In terms of biological role, probably part of an ABC transporter complex that could be involved in peptide import. Probably responsible for the translocation of the substrate across the membrane. In Brucella melitensis biotype 1 (strain ATCC 23456 / CCUG 17765 / NCTC 10094 / 16M), this protein is Putative peptide transport system permease protein BMEII0209.